The primary structure comprises 524 residues: RNA-splicing ligase RtcB homolog 1 (524 aa).

Mn(2+)-binding residues include aspartate 141, cysteine 144, histidine 249, histidine 281, and histidine 372. 248–252 (NHYLE) contributes to the GMP binding site. GMP-binding positions include 372-373 (HN), 421-424 (GGSM), serine 428, 447-450 (HGAG), and lysine 523. The GMP-histidine intermediate role is filled by histidine 447.

Belongs to the RtcB family. As to quaternary structure, catalytic component of the tRNA-splicing ligase complex. It depends on Mn(2+) as a cofactor.

It carries out the reaction a 3'-end 3'-phospho-ribonucleotide-RNA + a 5'-end dephospho-ribonucleoside-RNA + GTP = a ribonucleotidyl-ribonucleotide-RNA + GMP + diphosphate. The catalysed reaction is a 3'-end 2',3'-cyclophospho-ribonucleotide-RNA + a 5'-end dephospho-ribonucleoside-RNA + GTP + H2O = a ribonucleotidyl-ribonucleotide-RNA + GMP + diphosphate + H(+). Its function is as follows. Catalytic subunit of the tRNA-splicing ligase complex that acts by directly joining spliced tRNA halves to mature-sized tRNAs by incorporating the precursor-derived splice junction phosphate into the mature tRNA as a canonical 3',5'-phosphodiester. May act as an RNA ligase with broad substrate specificity, and may function toward other RNAs. The protein is RNA-splicing ligase RtcB homolog 1 of Entamoeba histolytica (strain ATCC 30459 / HM-1:IMSS / ABRM).